The chain runs to 366 residues: DNA-directed RNA polymerase II subunit GRINL1A (366 aa).

Positions Met-1–Glu-23 are disordered. Positions Asp-15 to Lys-39 form a coiled coil. The segment at Arg-29 to Val-68 is important for transcription repressor activity. 4 disordered regions span residues Ala-88–Asn-140, Ile-158–Glu-182, Ala-201–Lys-225, and Ala-237–Arg-280. Residues Thr-90–Gln-100 show a composition bias toward basic and acidic residues. A compositionally biased stretch (low complexity) spans Ser-101 to Ser-127. The segment at Lys-225–His-296 is interaction with Pol II. Residues Val-251–Ser-272 show a composition bias toward polar residues. The residue at position 268 (Ser-268) is a Phosphoserine. Positions Leu-297 to Arg-312 are important for transcription repressor activity. The stretch at Ala-299–Arg-333 forms a coiled coil. Residues Glu-313–Met-338 form an interaction with Pol II region. The segment at Met-338–Cys-366 is disordered. The segment covering Ser-347–Ala-358 has biased composition (basic and acidic residues).

Belongs to the GRINL1 family. In terms of assembly, component of the Pol II(G) complex, which contains the RNA polymerase II (Pol II) core complex subunits and POLR2M isoform 1. Pol II(G) appears to be an abundant form of Pol II. In terms of processing, dephosphorylated at Ser-268 by the PNUTS-PP1 complex, promoting RNA polymerase II transcription pause-release.

It localises to the nucleus. Functionally, appears to be a stable component of the Pol II(G) complex form of RNA polymerase II (Pol II). Pol II synthesizes mRNA precursors and many functional non-coding RNAs and is the central component of the basal RNA polymerase II transcription machinery. May play a role in the Mediator complex-dependent regulation of transcription activation. Acts as a negative regulator of transcriptional activation; this repression is relieved by the Mediator complex, which restores Pol II(G) activator-dependent transcription to a level equivalent to that of Pol II. The sequence is that of DNA-directed RNA polymerase II subunit GRINL1A (Polr2m) from Mus musculus (Mouse).